The sequence spans 309 residues: Olfactory receptor 1A1 (309 aa).

Residues 1-25 (MRENNQSSTLEFILLGVTGQQEQED) lie on the Extracellular side of the membrane. Asparagine 5 is a glycosylation site (N-linked (GlcNAc...) asparagine). Residues 26–49 (FFYILFLFIYPITLIGNLLIVLAI) traverse the membrane as a helical segment. Residues 50-57 (CSDVHLHN) lie on the Cytoplasmic side of the membrane. Residues 58-79 (PMYFLLANLSLVDIFFSSVTIP) form a helical membrane-spanning segment. Over 80 to 100 (KMLANHLSGSKSISFGGCLTQ) the chain is Extracellular. Cysteines 97 and 189 form a disulfide. The chain crosses the membrane as a helical span at residues 101–120 (MYFMIDLGNTDSYTLAAMAY). Residues 121–139 (DRAVAISRPLHYTTIMSPR) lie on the Cytoplasmic side of the membrane. The helical transmembrane segment at 140 to 158 (SCIWLIAGSWVIGNANALP) threads the bilayer. Topologically, residues 159-195 (HTLLTASLSFCGNQEVANFYCDITPLLKLSCSDIHFH) are extracellular. The chain crosses the membrane as a helical span at residues 196–218 (VKMMYLGVGIFSVPLLCIIVSYI). The Cytoplasmic segment spans residues 219–235 (RVFSTVFQVPSTKGVLK). The helical transmembrane segment at 236–258 (AFSTCGSHLTVVSLYYGTVMGMY) threads the bilayer. The Extracellular segment spans residues 259 to 270 (FRPLTNYSLKDA). N-linked (GlcNAc...) asparagine glycosylation occurs at asparagine 264. A helical transmembrane segment spans residues 271-290 (VITVMCTAVTPMLNPFIYSL). Over 291–309 (RNRDMKAALQKLFNKRISS) the chain is Cytoplasmic.

This sequence belongs to the G-protein coupled receptor 1 family.

It localises to the cell membrane. In terms of biological role, odorant receptor. This Gorilla gorilla gorilla (Western lowland gorilla) protein is Olfactory receptor 1A1 (OR1A1).